The following is a 265-amino-acid chain: Hydroxyethylthiazole kinase 2 (265 aa).

Met39 provides a ligand contact to substrate. Residues Lys115 and Thr168 each coordinate ATP. Gly195 is a substrate binding site.

This sequence belongs to the Thz kinase family. Mg(2+) is required as a cofactor.

It carries out the reaction 5-(2-hydroxyethyl)-4-methylthiazole + ATP = 4-methyl-5-(2-phosphooxyethyl)-thiazole + ADP + H(+). It functions in the pathway cofactor biosynthesis; thiamine diphosphate biosynthesis; 4-methyl-5-(2-phosphoethyl)-thiazole from 5-(2-hydroxyethyl)-4-methylthiazole: step 1/1. Its function is as follows. Catalyzes the phosphorylation of the hydroxyl group of 4-methyl-5-beta-hydroxyethylthiazole (THZ). The chain is Hydroxyethylthiazole kinase 2 from Clostridium botulinum (strain Kyoto / Type A2).